The primary structure comprises 218 residues: MNPRIRAAAAVAPQLQADMDPSAESIAGVDEVGRGCWFGPVFAGAVVLTEVAAVELLAEGLTDSKALTVRRRARLVPLIEDAATAWALGQASAREIDALGIRSATELAMLRALQRLPTPLELVLVDGVLPLRLWMGPQRTVVRGDSKCAAIAAASVLAKQARDGLIKRLASRFYGYGLERHVGYGTAIHRRALLDLGPTELHRRSFLTKLFAVNGSLT.

The 195-residue stretch at 24–218 (ESIAGVDEVG…KLFAVNGSLT (195 aa)) folds into the RNase H type-2 domain. Residues D30, E31, and D126 each contribute to the a divalent metal cation site.

Belongs to the RNase HII family. Mn(2+) is required as a cofactor. Requires Mg(2+) as cofactor.

It is found in the cytoplasm. It catalyses the reaction Endonucleolytic cleavage to 5'-phosphomonoester.. Endonuclease that specifically degrades the RNA of RNA-DNA hybrids. The protein is Ribonuclease HII of Prochlorococcus marinus (strain MIT 9313).